The primary structure comprises 1192 residues: Coiled-coil domain-containing protein 40 (1192 aa).

Disordered regions lie at residues 1-78, 126-153, 173-196, 211-246, and 261-289; these read MMDA…PGMD, KAKH…LEVS, SSPE…NVSA, EPIE…YQRD, and GSLT…STPR. The segment covering 27–45 has biased composition (acidic residues); the sequence is PETEVEFIGETAPDTDVEF. Over residues 215–228 the composition is skewed to pro residues; the sequence is PTEPPEPAEPPKPA. Positions 267–279 are enriched in acidic residues; sequence DTDDLPLETDEPP. Serine 306 is subject to Phosphoserine. Coiled-coil stretches lie at residues 308-369, 425-451, 581-649, 733-768, 830-871, 919-972, and 1044-1118; these read EALL…ATKQ, KTCQ…ALHL, DSEI…MLNK, NTNC…EIAR, LQQE…KIAH, LRTL…EMRS, and QQRE…IVTL.

This sequence belongs to the CCDC40 family. In terms of tissue distribution, specifically expressed in the embryonic node and midline.

It localises to the cytoplasm. The protein resides in the cell projection. The protein localises to the cilium. In terms of biological role, required for assembly of dynein regulatory complex (DRC) and inner dynein arm (IDA) complexes, which are responsible for ciliary beat regulation, thereby playing a central role in motility in cilia and flagella. Probably acts together with CCDC39 to form a molecular ruler that determines the 96 nanometer (nm) repeat length and arrangements of components in cilia and flagella. Not required for outer dynein arm complexes assembly. Required for axonemal recruitment of CCDC39. This chain is Coiled-coil domain-containing protein 40, found in Mus musculus (Mouse).